The chain runs to 216 residues: Somatotropin (216 aa).

An N-terminal signal peptide occupies residues 1–26; it reads MAAGPRTSVLLAFGLLCLPWPQDVGA. A Zn(2+)-binding site is contributed by His-45. Cys-78 and Cys-189 are oxidised to a cystine. At Ser-131 the chain carries Phosphoserine. Residue Glu-198 participates in Zn(2+) binding. Cys-206 and Cys-214 are joined by a disulfide.

It belongs to the somatotropin/prolactin family.

The protein localises to the secreted. Functionally, plays an important role in growth control. Its major role in stimulating body growth is to stimulate the liver and other tissues to secrete IGF1. It stimulates both the differentiation and proliferation of myoblasts. It also stimulates amino acid uptake and protein synthesis in muscle and other tissues. The sequence is that of Somatotropin (GH1) from Equus caballus (Horse).